We begin with the raw amino-acid sequence, 367 residues long: Peptide chain release factor 2 (367 aa).

Q254 carries the post-translational modification N5-methylglutamine.

The protein belongs to the prokaryotic/mitochondrial release factor family. Post-translationally, methylated by PrmC. Methylation increases the termination efficiency of RF2.

Its subcellular location is the cytoplasm. Its function is as follows. Peptide chain release factor 2 directs the termination of translation in response to the peptide chain termination codons UGA and UAA. The protein is Peptide chain release factor 2 of Leptospira borgpetersenii serovar Hardjo-bovis (strain JB197).